The chain runs to 286 residues: MKIIGLQSSSSLARKVAEQLHSELVLPEERRFPDGELYVRYDADLNGEDVFIIGNTHTDAEIIEMILSLSAVRDYQVKSVNIIAPYYGYARQHQRYRRGEPISSQIFTEIFASYSTSIATVDIHDEQTLSYSKVRFTDLHADRSIIDFYRHVDIDYVVSPDDGGLQRVKHVAEALGKKYFYIEKKRIDDRTVEMKAPDIDLNGKKVLILDDIISTGGTIAKSSSILRQKGASKIYVSAIHGLFVNSSESKILENADEIHVTDTVAGKFSDISVYQVVCDYIAGKHA.

Residues 34 to 36 and 91 to 92 each bind ATP; these read DGE and RQ. Residues His124 and Asp161 each contribute to the Mg(2+) site. Lys184 is an active-site residue. Residues Arg186, Asp210, and 214–218 contribute to the D-ribose 5-phosphate site; that span reads STGGT.

This sequence belongs to the ribose-phosphate pyrophosphokinase family. Class III (archaeal) subfamily. Mg(2+) serves as cofactor.

The protein resides in the cytoplasm. The enzyme catalyses D-ribose 5-phosphate + ATP = 5-phospho-alpha-D-ribose 1-diphosphate + AMP + H(+). The protein operates within metabolic intermediate biosynthesis; 5-phospho-alpha-D-ribose 1-diphosphate biosynthesis; 5-phospho-alpha-D-ribose 1-diphosphate from D-ribose 5-phosphate (route I): step 1/1. Involved in the biosynthesis of the central metabolite phospho-alpha-D-ribosyl-1-pyrophosphate (PRPP) via the transfer of pyrophosphoryl group from ATP to 1-hydroxyl of ribose-5-phosphate (Rib-5-P). This is Ribose-phosphate pyrophosphokinase from Thermoplasma acidophilum (strain ATCC 25905 / DSM 1728 / JCM 9062 / NBRC 15155 / AMRC-C165).